We begin with the raw amino-acid sequence, 250 residues long: Pyrroloquinoline-quinone synthase (250 aa).

Belongs to the PqqC family.

The catalysed reaction is 6-(2-amino-2-carboxyethyl)-7,8-dioxo-1,2,3,4,7,8-hexahydroquinoline-2,4-dicarboxylate + 3 O2 = pyrroloquinoline quinone + 2 H2O2 + 2 H2O + H(+). It participates in cofactor biosynthesis; pyrroloquinoline quinone biosynthesis. Its function is as follows. Ring cyclization and eight-electron oxidation of 3a-(2-amino-2-carboxyethyl)-4,5-dioxo-4,5,6,7,8,9-hexahydroquinoline-7,9-dicarboxylic-acid to PQQ. In Xanthomonas axonopodis pv. citri (strain 306), this protein is Pyrroloquinoline-quinone synthase.